Consider the following 370-residue polypeptide: Spermidine/putrescine import ATP-binding protein PotA 1 (370 aa).

In terms of domain architecture, ABC transporter spans 12 to 250; sequence VSIRAVRKVY…PGNRFVADFI (239 aa). Position 48-55 (48-55) interacts with ATP; that stretch reads GPSGCGKT.

It belongs to the ABC transporter superfamily. Spermidine/putrescine importer (TC 3.A.1.11.1) family. As to quaternary structure, the complex is composed of two ATP-binding proteins (PotA), two transmembrane proteins (PotB and PotC) and a solute-binding protein (PotD).

It is found in the cell inner membrane. The catalysed reaction is ATP + H2O + polyamine-[polyamine-binding protein]Side 1 = ADP + phosphate + polyamineSide 2 + [polyamine-binding protein]Side 1.. Its function is as follows. Part of the ABC transporter complex PotABCD involved in spermidine/putrescine import. Responsible for energy coupling to the transport system. The protein is Spermidine/putrescine import ATP-binding protein PotA 1 of Pseudomonas aeruginosa (strain ATCC 15692 / DSM 22644 / CIP 104116 / JCM 14847 / LMG 12228 / 1C / PRS 101 / PAO1).